Consider the following 957-residue polypeptide: Protein CRT10 (957 aa).

The segment at 695–719 is disordered; that stretch reads NSTEEDDVNSDPENEESGSSLTSFQ. Positions 697–710 are enriched in acidic residues; the sequence is TEEDDVNSDPENEE. The residue at position 704 (S704) is a Phosphoserine.

Component of a cullin-RING ligase (CRL) composed of 4 subunits: the RING protein HRT1, the cullin RTT101, a linker protein MMS1, and the substrate receptor CRT10. Interacts with MMS1.

In terms of biological role, substrate targeting component of a cullin-RING-based E3 ubiquitin-protein ligase complex RTT101(MMS1-CRT10). RTT101(MMS1-CRT10) may regulate nucleotide synthesis through transcriptional regulation of RNR genes encoding ribonucleotide reductases. The chain is Protein CRT10 (CRT10) from Saccharomyces cerevisiae (strain ATCC 204508 / S288c) (Baker's yeast).